The following is a 2327-amino-acid chain: Voltage-dependent N-type calcium channel subunit alpha-1B (2327 aa).

Positions 1 to 37 are disordered; sequence MVRFGDELGGRYGGTGGGERARGGGAGGAGGPGQGGL. Topologically, residues 1–90 are cytoplasmic; that stretch reads MVRFGDELGG…DNVVRKYAKR (90 aa). The span at 10–37 shows a compositional bias: gly residues; the sequence is GRYGGTGGGERARGGGAGGAGGPGQGGL. Arg22 is modified (omega-N-methylarginine). One copy of the I repeat lies at 82–359; the sequence is NVVRKYAKRI…LVLGVLSGEF (278 aa). Residues 91-114 form a helical membrane-spanning segment; that stretch reads ITEWPPFEYMILATIIANCIVLAL. Topologically, residues 115–131 are extracellular; the sequence is EQHLPDGDKTPMSERLD. Residues 132-152 form a helical membrane-spanning segment; it reads DTEPYFIGIFCFEAGIKIIAL. Topologically, residues 153–163 are cytoplasmic; sequence GFVFHKGSYLR. Residues 164–182 traverse the membrane as a helical segment; it reads NGWNVMDFVVVLTGILATA. The Extracellular segment spans residues 183–187; sequence GTDFD. The chain crosses the membrane as a helical span at residues 188 to 211; it reads LRTLRAVRVLRPLKLVSGIPSLQV. Residues 212–221 lie on the Cytoplasmic side of the membrane; that stretch reads VLKSIMKAMV. The helical transmembrane segment at 222–244 threads the bilayer; the sequence is PLLQIGLLLFFAILMFAIIGLEF. The Extracellular segment spans residues 245-331; it reads YMGKFHKACF…NTNDAAGNTW (87 aa). A glycan (N-linked (GlcNAc...) asparagine) is linked at Asn256. Residues 332–356 form a helical membrane-spanning segment; that stretch reads NWLYFIPLIIIGSFFMLNLVLGVLS. The Cytoplasmic portion of the chain corresponds to 357 to 482; sequence GEFAKERERV…FFIRRMVKAQ (126 aa). Positions 379-396 are binding to the beta subunit; that stretch reads QQIERELNGYLEWIFKAE. Ser411 is subject to Phosphoserine. 451–458 contacts ATP; sequence ASLKSGKT. An II repeat occupies 468-712; sequence EKMFRFFIRR…VFLAIAVDNL (245 aa). A helical membrane pass occupies residues 483 to 501; sequence SFYWVVLCVVALNTLCVAM. Over 502-511 the chain is Extracellular; it reads VHYNQPQRLT. The helical transmembrane segment at 512-534 threads the bilayer; the sequence is TALYFAEFVFLGLFLTEMSLKMY. At 535-544 the chain is on the cytoplasmic side; sequence GLGPRSYFRS. Ser544 serves as a coordination point for a 1,2-diacyl-sn-glycero-3-phospho-(1D-myo-inositol-4,5-bisphosphate). A helical transmembrane segment spans residues 545 to 566; the sequence is SFNCFDFGVIVGSIFEVVWAAI. Over 567-573 the chain is Extracellular; sequence KPGTSFG. Residues 574–586 form a helical membrane-spanning segment; that stretch reads ISVLRALRLLRIF. Arg584 and Lys587 together coordinate a 1,2-diacyl-sn-glycero-3-phospho-(1D-myo-inositol-4,5-bisphosphate). Over 587–604 the chain is Cytoplasmic; it reads KVTKYWNSLRNLVVSLLN. Residues 605-630 traverse the membrane as a helical segment; the sequence is SMKSIISLLFLLFLFIVVFALLGMQL. Residues 631–682 are Extracellular-facing; it reads FGGQFNFQDETPTTNFDTFPAAILTVFQILTGEDWNAVMYHGIESQGGVSKG. The chain crosses the membrane as a helical span at residues 683–709; that stretch reads MFSSFYFIVLTLFGNYTLLNVFLAIAV. The Cytoplasmic segment spans residues 710-1140; the sequence is DNLANAQELT…FCHYIVTMRY (431 aa). Ser745, Ser748, and Ser783 each carry phosphoserine. Disordered regions lie at residues 802–1015 and 1042–1066; these read TRHV…KEPH and EQPE…PSTT. 5 stretches are compositionally biased toward basic and acidic residues: residues 805–826, 869–885, 914–924, 961–972, and 988–1015; these read VRPD…RDGL, EQDR…EERA, GSPEEATEREP, GPREAENNEEPT, and PERE…KEPH. The span at 1050 to 1066 shows a compositional bias: polar residues; it reads QRNVTRMGSQPSDPSTT. Ser1058 is modified (phosphoserine). The stretch at 1126 to 1412 is one III repeat; that stretch reads NLLRRFCHYI…IFVALIIITF (287 aa). Residues 1141-1159 traverse the membrane as a helical segment; it reads FEMVILVVIALSSIALAAE. The Extracellular segment spans residues 1160–1167; it reads DPVRTDSF. A helical transmembrane segment spans residues 1168–1192; it reads RNNALKYMDYIFTGVFTFEMVIKMI. At 1193–1206 the chain is on the cytoplasmic side; it reads DLGLLLHPGAYFRD. A helical membrane pass occupies residues 1207–1231; it reads LWNILDFIVVSGALVAFAFSSFMGG. Topologically, residues 1232-1237 are extracellular; the sequence is SKGKDI. The chain crosses the membrane as a helical span at residues 1238 to 1258; that stretch reads NTIKSLRVLRVLRPLKTIKRL. The Cytoplasmic portion of the chain corresponds to 1259-1276; the sequence is PKLKAVFDCVVNSLKNVL. The helical transmembrane segment at 1277-1296 threads the bilayer; that stretch reads NILIVYMLFMFIFAVIAVQL. Residues 1297 to 1383 are Extracellular-facing; that stretch reads FKGKFFYCTD…EQGPSPGFRM (87 aa). A helical membrane pass occupies residues 1384 to 1409; the sequence is ELSIFYVVYFVVFPFFFVNIFVALII. The Cytoplasmic portion of the chain corresponds to 1410–1464; that stretch reads ITFQEQGDKVMSECSLEKNERACIDFAISAKPLTRYMPQNKQSFQYKTWTFVVSP. An IV repeat occupies 1449–1702; it reads NKQSFQYKTW…LFVAVIMDNF (254 aa). A helical membrane pass occupies residues 1465–1483; that stretch reads PFEYFIMAMIALNTVVLMM. Topologically, residues 1484 to 1491 are extracellular; that stretch reads KFYDAPYE. Residues 1492 to 1516 traverse the membrane as a helical segment; it reads YELMLKCLNIVFTSMFSMECILKII. Topologically, residues 1517-1526 are cytoplasmic; it reads AFGVLNYFRD. A helical membrane pass occupies residues 1527–1548; the sequence is AWNVFDFVTVLGSITDILVTEI. The Extracellular portion of the chain corresponds to 1549-1554; it reads ANNFIN. A glycan (N-linked (GlcNAc...) asparagine) is linked at Asn1554. The helical transmembrane segment at 1555–1573 threads the bilayer; it reads LSFLRLFRAARLIKLLRQG. Residues 1574–1592 lie on the Cytoplasmic side of the membrane; sequence YTIRILLWTFVQSFKALPY. The chain crosses the membrane as a helical span at residues 1593–1612; sequence VCLLIAMLFFIYAIIGMQVF. At 1613-1674 the chain is on the extracellular side; the sequence is GNIALDDDTS…ANASECGSDF (62 aa). Asn1666 carries an N-linked (GlcNAc...) asparagine glycan. The helical transmembrane segment at 1675–1698 threads the bilayer; sequence AYFYFVSFIFLCSFLMLNLFVAVI. Topologically, residues 1699–2327 are cytoplasmic; it reads MDNFEYLTRD…YHHPDQDHWC (629 aa). The EF-hand domain occupies 1715–1750; the sequence is HHLDEFIRVWAEYDPAACGRISYNDMFEMLKHMSPP. Positions 1728, 1734, and 1739 each coordinate Ca(2+). A disordered region spans residues 1972-2193; it reads TLRGPDGEPQ…TPRPSITYKT (222 aa). The segment covering 2039–2053 has biased composition (basic residues); it reads SHHHHHRCHRRRDKK. At Ser2056 the chain carries Phosphoserine. Residues 2088-2104 are compositionally biased toward basic and acidic residues; that stretch reads CRRDRKQERGRSQERRQ. Polar residues-rich tracts occupy residues 2131–2141 and 2152–2168; these read PSLSSHPTSPT and GSGS…SGAS. Residues Ser2212, Ser2221, and Ser2244 each carry the phosphoserine modification. Disordered regions lie at residues 2230–2249 and 2273–2292; these read EPLS…PYLG and ATNS…TSQS. Residues 2276–2292 are compositionally biased toward low complexity; the sequence is SGRSSRTSYVSSLTSQS.

It belongs to the calcium channel alpha-1 subunit (TC 1.A.1.11) family. CACNA1B subfamily. In terms of assembly, multisubunit complex consisting of alpha-1, alpha-2, beta and delta subunits in a 1:1:1:1 ratio. The channel activity is directed by the pore-forming and voltage-sensitive alpha-1 subunit. In many cases, this subunit is sufficient to generate voltage-sensitive calcium channel activity. The auxiliary subunits beta and alpha-2/delta linked by a disulfide bridge regulate the channel activity. Interacts with RIMS1. Interacts with FMR1 (via C-terminus); this interaction induces a decrease in the number of presynaptic functional CACNA1B channels at the cell surface. In terms of processing, phosphorylated in vitro by CaM-kinase II, PKA, PKC and CGPK. As to expression, widespread expression throughout the brain. Highest levels in pyramidal cell layers C1, C2 and C3 of the hippocampus, in the dentate gyrus, in the cortex layers 2 et 4, in the subiculum and the habenula.

It localises to the membrane. It catalyses the reaction Ca(2+)(in) = Ca(2+)(out). Its activity is regulated as follows. Is specifically blocked by omega-conotoxin GVIA. Is specifically blocked by omega-conotoxin MVIIA (ziconotide). Is insensitive to dihydropyridines (DHP). In terms of biological role, voltage-sensitive calcium channels (VSCC) mediate the entry of calcium ions into excitable cells and are also involved in a variety of calcium-dependent processes, including muscle contraction, hormone or neurotransmitter release, gene expression, cell motility, cell division and cell death. This alpha-1B subunit gives rise to N-type calcium currents. N-type calcium channels belong to the 'high-voltage activated' (HVA) group. They are involved in pain signaling. Calcium channels containing alpha-1B subunit may play a role in directed migration of immature neurons. Mediates Ca(2+) release probability at hippocampal neuronal soma and synaptic terminals. This Mus musculus (Mouse) protein is Voltage-dependent N-type calcium channel subunit alpha-1B (Cacna1b).